We begin with the raw amino-acid sequence, 1040 residues long: Multidrug resistance protein MdtB (1040 aa).

Transmembrane regions (helical) follow at residues 16 to 36 (FIMR…AGII), 347 to 367 (LMMA…NIPA), 369 to 389 (IIPG…MVFL), 396 to 416 (LTLM…IVVI), 440 to 460 (IGFT…PLLF), 472 to 492 (FAIT…TLTP), 537 to 557 (WLTL…WVFI), 863 to 883 (LGST…VLGI), 888 to 908 (FIHP…ALLA), 911 to 931 (IAGS…IGIV), 968 to 988 (ILMT…STGV), and 998 to 1018 (IGMV…TPVI).

The protein belongs to the resistance-nodulation-cell division (RND) (TC 2.A.6) family. MdtB subfamily. Part of a tripartite efflux system composed of MdtA, MdtB and MdtC. MdtB forms a heteromultimer with MdtC.

Its subcellular location is the cell inner membrane. Functionally, the MdtABC tripartite complex confers resistance against novobiocin and deoxycholate. The polypeptide is Multidrug resistance protein MdtB (Escherichia coli O45:K1 (strain S88 / ExPEC)).